Reading from the N-terminus, the 361-residue chain is UDP-N-acetylglucosamine--N-acetylmuramyl-(pentapeptide) pyrophosphoryl-undecaprenol N-acetylglucosamine transferase (361 aa).

UDP-N-acetyl-alpha-D-glucosamine is bound by residues 12–14 (TGG), asparagine 126, arginine 167, serine 192, isoleucine 247, and glutamine 292.

The protein belongs to the glycosyltransferase 28 family. MurG subfamily.

Its subcellular location is the cell inner membrane. It catalyses the reaction di-trans,octa-cis-undecaprenyl diphospho-N-acetyl-alpha-D-muramoyl-L-alanyl-D-glutamyl-meso-2,6-diaminopimeloyl-D-alanyl-D-alanine + UDP-N-acetyl-alpha-D-glucosamine = di-trans,octa-cis-undecaprenyl diphospho-[N-acetyl-alpha-D-glucosaminyl-(1-&gt;4)]-N-acetyl-alpha-D-muramoyl-L-alanyl-D-glutamyl-meso-2,6-diaminopimeloyl-D-alanyl-D-alanine + UDP + H(+). Its pathway is cell wall biogenesis; peptidoglycan biosynthesis. Its function is as follows. Cell wall formation. Catalyzes the transfer of a GlcNAc subunit on undecaprenyl-pyrophosphoryl-MurNAc-pentapeptide (lipid intermediate I) to form undecaprenyl-pyrophosphoryl-MurNAc-(pentapeptide)GlcNAc (lipid intermediate II). This is UDP-N-acetylglucosamine--N-acetylmuramyl-(pentapeptide) pyrophosphoryl-undecaprenol N-acetylglucosamine transferase from Syntrophus aciditrophicus (strain SB).